The primary structure comprises 291 residues: NADH-cytochrome b5 reductase 2 (291 aa).

Residues P7–F23 traverse the membrane as a helical segment. Residues D41 to Q145 enclose the FAD-binding FR-type domain. FAD is bound at residue L148–L183.

It belongs to the flavoprotein pyridine nucleotide cytochrome reductase family. Requires FAD as cofactor.

It localises to the mitochondrion outer membrane. It carries out the reaction 2 Fe(III)-[cytochrome b5] + NADH = 2 Fe(II)-[cytochrome b5] + NAD(+) + H(+). Functionally, may mediate the reduction of outer membrane cytochrome b5. This is NADH-cytochrome b5 reductase 2 (MCR1) from Yarrowia lipolytica (strain CLIB 122 / E 150) (Yeast).